A 734-amino-acid chain; its full sequence is Methionine--tRNA ligase (734 aa).

The 'HIGH' region signature appears at 12–22 (PYVNNIPHLGN). 4 residues coordinate Zn(2+): Cys-143, Cys-146, Cys-155, and Cys-158. The 'KMSKS' region motif lies at 330 to 334 (KFSKS). Lys-333 lines the ATP pocket. The 106-residue stretch at 570-675 (FREKVLLRVV…QNPIAGERII (106 aa)) folds into the tRNA-binding domain.

It belongs to the class-I aminoacyl-tRNA synthetase family. MetG type 1 subfamily. Homodimer. Zn(2+) serves as cofactor.

Its subcellular location is the cytoplasm. The catalysed reaction is tRNA(Met) + L-methionine + ATP = L-methionyl-tRNA(Met) + AMP + diphosphate. Is required not only for elongation of protein synthesis but also for the initiation of all mRNA translation through initiator tRNA(fMet) aminoacylation. This is Methionine--tRNA ligase from Borreliella burgdorferi (strain ZS7) (Borrelia burgdorferi).